Reading from the N-terminus, the 455-residue chain is Peroxisomal membrane protein PEX3 (455 aa).

The segment covering 113–125 has biased composition (polar residues); it reads TVLSDDFSTSQEG. A disordered region spans residues 113 to 135; sequence TVLSDDFSTSQEGAISEDTNKPP. Residues 155–171 traverse the membrane as a helical segment; the sequence is FLTLIYCESLLIVFLHL.

The protein belongs to the peroxin-3 family. As to quaternary structure, component of the peroxisomal docking complex, composed of at least PEX3, PEX13, PEX14 and PEX17. Component of the peroxisomal translocation complex, composed of at least PEX3, PEX2, PEX10 and PEX12. Interacts with PEX19. Interacts with the pexophagy receptor ATG30.

Its subcellular location is the peroxisome membrane. Peroxisomal membrane protein required for peroxisome biosynthesis. Shared component of both the peroxisomal docking complex and the peroxisomal translocation complex. The two types of peroxisomal matrix targeting signals, PTS1 and PTS2, are first recognized in the cytosol by their receptors PEX5 and PEX7, respectively, which then carry the cargo to the peroxisomal membrane. The peroxisomal targeting signal (PTS) receptor-cargo complexes interact with peroxisomal membrane protein (PMP) components of the docking complex. They have then additional downstream interactions with the translocation complex, leading to the transport of fully folded and oligomerized cargo into the peroxisome matrix. PEX3 acts as an anchoring site for PEX19 on the peroxisomal membrane and thus plays a crucial role in the assembly of the peroxisomal translocation complex. Is also essential for the interaction between the two complexes. Finally. PEX3 activates selective autophagy of peroxisomes (pexophagy) via interaction with the pexophagy receptor ATG30. This Komagataella phaffii (strain GS115 / ATCC 20864) (Yeast) protein is Peroxisomal membrane protein PEX3.